Reading from the N-terminus, the 522-residue chain is Signal transduction histidine-protein kinase/phosphatase MprB (522 aa).

Topologically, residues 1–30 (MIRLYRPQRPPLRAPLRATPSLSLRWRVML) are cytoplasmic. A helical transmembrane segment spans residues 31-51 (LAMSMVAMVVVLMAFAVYAVI). Residues 52 to 167 (SAALYSDIDN…PTEAVMNKLR (116 aa)) lie on the Extracellular side of the membrane. The chain crosses the membrane as a helical span at residues 168-188 (WVLLIVGGVGVAVAAVAGGMV). The Cytoplasmic portion of the chain corresponds to 189-522 (TRAGLRPVAR…SVDSQSARAR (334 aa)). Residues 190–242 (RAGLRPVARLTEAAERVARTDDLRPIPVFGSDELARLTESFNLMLRALAESRE) enclose the HAMP domain. The region spanning 250–470 (DAGHELRTPL…SFYVLLPGRS (221 aa)) is the Histidine kinase domain. A Phosphohistidine; by autocatalysis modification is found at H253. The segment at 467-522 (PGRSLPPAGHSTPAGESETDQAEAATDPAVPVAGDTANSRESANVISVDSQSARAR) is disordered. A compositionally biased stretch (polar residues) spans 502–522 (TANSRESANVISVDSQSARAR).

The cofactor is Mg(2+). Mn(2+) is required as a cofactor. Post-translationally, autophosphorylated.

Its subcellular location is the cell membrane. It catalyses the reaction ATP + protein L-histidine = ADP + protein N-phospho-L-histidine.. Its function is as follows. Member of the two-component regulatory system MprB/MprA which contributes to maintaining a balance among several systems involved in stress resistance and is required for establishment and maintenance of persistent infection in the host. In response to environmental signals MprB acts both as a membrane-associated protein kinase that undergoes autophosphorylation and subsequently transfers the phosphate to MprA, and a protein phosphatase that dephosphorylates phospho-MprA. In Mycolicibacterium paratuberculosis (strain ATCC BAA-968 / K-10) (Mycobacterium paratuberculosis), this protein is Signal transduction histidine-protein kinase/phosphatase MprB (mprB).